Consider the following 584-residue polypeptide: Tricyclene synthase 1e20, chloroplastic (584 aa).

A chloroplast-targeting transit peptide spans 1 to 45 (MIYIWICFYLQTTLLPCSLSTRTKFAICHNTSKLHRAAYKTSRWN). 3 N-linked (GlcNAc...) asparagine glycosylation sites follow: Asn30, Asn209, and Asn322. Residues Asp341 and Asp345 each contribute to the Mg(2+) site. The DDXXD motif motif lies at 341–345 (DDIFD). N-linked (GlcNAc...) asparagine glycosylation is found at Asn387 and Asn468. Asn485, Ser489, and Glu493 together coordinate Mg(2+). An N-linked (GlcNAc...) asparagine glycan is attached at Asn512.

Belongs to the terpene synthase family. Tpsg subfamily. It depends on Mg(2+) as a cofactor. The cofactor is Mn(2+). In terms of tissue distribution, accumulates at low levels in flowers; mostly expressed in both upper and lower petal lobes, and, to a lower extent, in tube and stamens.

It is found in the plastid. The protein localises to the chloroplast stroma. The enzyme catalyses (2E)-geranyl diphosphate = tricyclene + diphosphate. It carries out the reaction (2E)-geranyl diphosphate = beta-myrcene + diphosphate. The protein operates within secondary metabolite biosynthesis; terpenoid biosynthesis. May contribute to floral scent emission. This Antirrhinum majus (Garden snapdragon) protein is Tricyclene synthase 1e20, chloroplastic (1e20).